Consider the following 348-residue polypeptide: Protein pelota homolog (348 aa).

The protein belongs to the eukaryotic release factor 1 family. Pelota subfamily. Monomer. It depends on a divalent metal cation as a cofactor.

It is found in the cytoplasm. Its function is as follows. May function in recognizing stalled ribosomes, interact with stem-loop structures in stalled mRNA molecules, and effect endonucleolytic cleavage of the mRNA. May play a role in the release non-functional ribosomes and degradation of damaged mRNAs. Has endoribonuclease activity. The protein is Protein pelota homolog of Methanococcus maripaludis (strain C7 / ATCC BAA-1331).